The sequence spans 748 residues: Pentatricopeptide repeat-containing protein At3g13880 (748 aa).

PPR repeat units lie at residues 46-80 (DSEGYKILFQTAAKSGSVVLGKLAHGHMIKSSLNP), 81-111 (CLYLLNNLLNMYCKCRELGFARQLFDRMPER), 112-146 (NIISFNSLISGYTQMGFYEQAMELFLEAREANLKL), 147-181 (DKFTYAGALGFCGERCDLDLGELLHGLVVVNGLSQ), 182-212 (QVFLINVLIDMYSKCGKLDQAMSLFDRCDER), 213-247 (DQVSWNSLISGYVRVGAAEEPLNLLAKMHRDGLNL), 248-285 (TTYALGSVLKACCINLNEGFIEKGMAIHCYTAKLGMEF), 286-316 (DIVVRTALLDMYAKNGSLKEAIKLFSLMPSK), 317-356 (NVVTYNAMISGFLQMDEITDEASSEAFKLFMDMQRRGLEP), 357-391 (SPSTFSVVLKACSAAKTLEYGRQIHALICKNNFQS), 392-422 (DEFIGSALIELYALMGSTEDGMQCFASTSKQ), 423-457 (DIASWTSMIDCHVQNEQLESAFDLFRQLFSSHIRP), 458-492 (EEYTVSLMMSACADFAALSSGEQIQGYAIKSGIDA), 493-523 (FTSVKTSSISMYAKSGNMPLANQVFIEVQNP), 524-558 (DVATYSAMISSLAQHGSANEALNIFESMKTHGIKP), 559-589 (NQQAFLGVLIACCHGGLVTQGLKYFQCMKND), and 595-629 (NEKHFTCLVDLLGRTGRLSDAENLILSSGFQDHPV). The segment at 630 to 705 (TWRALLSSCR…EPALSWIVIG (76 aa)) is type E motif. A type E(+) motif region spans residues 706-736 (NQTHSFAVADLSHPSSQMIYTMLETMDNVDF).

Belongs to the PPR family. PCMP-E subfamily.

The polypeptide is Pentatricopeptide repeat-containing protein At3g13880 (PCMP-E89) (Arabidopsis thaliana (Mouse-ear cress)).